We begin with the raw amino-acid sequence, 290 residues long: Concanavalin-A (290 aa).

Residues 1 to 29 form the signal peptide; sequence MAISKKSSLFLPIFTFITMFLMVVNKVSS. The a carbohydrate site is built by Asp-119 and Arg-139. Residue Asp-119 participates in Ca(2+) binding. A propeptide spanning residues 149–163 is cleaved from the precursor; the sequence is VIRNSTTIDFNAAYN. Asn-152 carries N-linked (GlcNAc...) asparagine glycosylation. The Mn(2+) site is built by Glu-171 and Asp-173. Ca(2+) is bound by residues Asp-173, Tyr-175, Asn-177, and Asp-182. Residues Asp-182 and His-187 each contribute to the Mn(2+) site. 262–263 lines the a carbohydrate pocket; it reads LY. The propeptide occupies 282–290; it reads EIPDIATVV.

Belongs to the leguminous lectin family. In terms of assembly, homotetramer. The mature chain consists of residues 164-281 followed by 30-148. To form a mature chain the precursor undergoes further post-translational modification after removal of the signal sequence; cleavage after Asn at positions Asn-148, Asn-163, and Asn-281 is followed by transposition and ligation (By formation of a new peptide bond) of residues 164-281 and 30-148.

Functionally, glucose/D-mannose/rhamnose specific lectin. Has hemagglutinating activity towards rabbit erythrocytes. Has mitogenic activity towards murine splenocytes that is inhibited by glucose. Inhibits HIV-1 reverse transcriptase with an IC(50) of 35 uM. Has a potent antiproliferative activity against L1210 leukemia cells in vitro that is not inhibited by glucose. Inhibits translation in cell-free rabbit reticulocyte system with an IC(50) of 2.08 uM. Lacks anti-fungal activity against M.arachidicola, B.cenera and F.oxysporum. This is Concanavalin-A from Canavalia gladiata (Sword bean).